A 394-amino-acid chain; its full sequence is p-hydroxybenzoate hydroxylase (394 aa).

FAD contacts are provided by residues serine 13, glutamate 32, 42–47, and glutamine 102; that span reads RIRAGV. Substrate is bound by residues tyrosine 201, 212–214, and tyrosine 222; that span reads SQR. Aspartate 286 provides a ligand contact to FAD. Proline 293 provides a ligand contact to substrate. 299 to 300 contacts FAD; that stretch reads LN.

Belongs to the aromatic-ring hydroxylase family. Homodimer. The cofactor is FAD.

The enzyme catalyses 4-hydroxybenzoate + NADPH + O2 + H(+) = 3,4-dihydroxybenzoate + NADP(+) + H2O. The protein operates within aromatic compound metabolism; benzoate degradation via hydroxylation; 3,4-dihydroxybenzoate from benzoate: step 2/2. Its function is as follows. Catalyzes the incorporation of an atom of dioxygen into p-hydroxybenzoate (p-OHB) to form 3,4-dihydroxybenzoate (3,4DOHB). The reaction occurs in two parts: reduction of the flavin adenine dinucleotide (FAD) in the enzyme by reduced nicotinamide adenine dinucleotide phosphate (NADPH) in response to binding p-hydroxybenzoate to the enzyme and oxidation of reduced FAD with oxygen to form a hydroperoxide, which then oxygenates p-hydroxybenzoate. In Pseudomonas aeruginosa (strain ATCC 15692 / DSM 22644 / CIP 104116 / JCM 14847 / LMG 12228 / 1C / PRS 101 / PAO1), this protein is p-hydroxybenzoate hydroxylase.